A 173-amino-acid polypeptide reads, in one-letter code: Propanediol dehydratase small subunit (173 aa).

The protein belongs to the diol/glycerol dehydratase small subunit family. The propanediol dehydratase enzyme is a heterotrimeric complex composed of a large (PduC), a medium (PduD) and a small (PduE) subunit. Adenosylcob(III)alamin is required as a cofactor.

The protein localises to the bacterial microcompartment. The catalysed reaction is propane-1,2-diol = propanal + H2O. Its pathway is polyol metabolism; 1,2-propanediol degradation. Its activity is regulated as follows. Inhibited by glycerol. In terms of biological role, part of the PduCDE complex that catalyzes the dehydration of 1,2-propanediol (1,2-PD) to propionaldehyde. Required for S.typhimurium growth on 1,2-PD as the sole carbon and energy source. Localized in the bacterial microcompartment (BMC) dedicated to 1,2-PD degradation. Its function is as follows. The 1,2-PD-specific bacterial microcompartment (BMC) concentrates low levels of 1,2-PD catabolic enzymes, concentrates volatile reaction intermediates thus enhancing pathway flux and keeps the level of toxic, mutagenic propionaldehyde low. The chain is Propanediol dehydratase small subunit from Salmonella typhimurium (strain LT2 / SGSC1412 / ATCC 700720).